Consider the following 197-residue polypeptide: Peptide deformylase (197 aa).

Residues cysteine 106 and histidine 148 each coordinate Fe cation. Residue glutamate 149 is part of the active site. Histidine 152 contacts Fe cation.

This sequence belongs to the polypeptide deformylase family. Fe(2+) is required as a cofactor.

The enzyme catalyses N-terminal N-formyl-L-methionyl-[peptide] + H2O = N-terminal L-methionyl-[peptide] + formate. In terms of biological role, removes the formyl group from the N-terminal Met of newly synthesized proteins. Requires at least a dipeptide for an efficient rate of reaction. N-terminal L-methionine is a prerequisite for activity but the enzyme has broad specificity at other positions. In Mycobacterium tuberculosis (strain ATCC 25177 / H37Ra), this protein is Peptide deformylase.